The sequence spans 208 residues: Octanoyltransferase (208 aa).

The region spanning Gly31 to Ala208 is the BPL/LPL catalytic domain. Substrate-binding positions include Arg70–His77, Ala142–Gly144, and Gly155–Ala157. The active-site Acyl-thioester intermediate is the Cys173.

It belongs to the LipB family.

Its subcellular location is the cytoplasm. It catalyses the reaction octanoyl-[ACP] + L-lysyl-[protein] = N(6)-octanoyl-L-lysyl-[protein] + holo-[ACP] + H(+). The protein operates within protein modification; protein lipoylation via endogenous pathway; protein N(6)-(lipoyl)lysine from octanoyl-[acyl-carrier-protein]: step 1/2. Functionally, catalyzes the transfer of endogenously produced octanoic acid from octanoyl-acyl-carrier-protein onto the lipoyl domains of lipoate-dependent enzymes. Lipoyl-ACP can also act as a substrate although octanoyl-ACP is likely to be the physiological substrate. The sequence is that of Octanoyltransferase from Anaplasma phagocytophilum (strain HZ).